The chain runs to 318 residues: Pheromone-regulated membrane protein 5 (318 aa).

Residues glycine 75–isoleucine 98 traverse the membrane as a helical segment. Serine 129 carries the phosphoserine modification. The segment covering threonine 238–leucine 247 has biased composition (low complexity). A disordered region spans residues threonine 238 to glutamate 318. Residues glycine 250–lysine 261 are compositionally biased toward basic and acidic residues. A compositionally biased stretch (polar residues) spans serine 276 to arginine 285. Residues serine 279, serine 282, and serine 288 each carry the phosphoserine modification. The span at histidine 309–glutamate 318 shows a compositional bias: basic and acidic residues. A Glycyl lysine isopeptide (Lys-Gly) (interchain with G-Cter in ubiquitin) cross-link involves residue lysine 314.

The protein belongs to the PRM5 family.

It is found in the membrane. This chain is Pheromone-regulated membrane protein 5 (PRM5), found in Saccharomyces cerevisiae (strain ATCC 204508 / S288c) (Baker's yeast).